We begin with the raw amino-acid sequence, 286 residues long: Transcriptional regulator of yeast form adherence 4 (286 aa).

Low complexity-rich tracts occupy residues 1 to 29 (MSLPMSPVSPINTTTSTSTTTTPLSPPSS) and 37 to 65 (LSTSISNNSITSDSSLDSNTSTSSTTTTN). Residues 1–71 (MSLPMSPVSP…TTTNYGTKTP (71 aa)) are disordered. 2 consecutive C2H2-type zinc fingers follow at residues 78–101 (FNCTLCQRAFTREEHLTRHTLSTH) and 107–130 (FTCGICSRPFSRRDLLLRHAKNLH). Residues 146-260 (HCNKDNDSKS…ITNSSTSHIH (115 aa)) are disordered. Low complexity-rich tracts occupy residues 156 to 165 (GSDSNTNKTN) and 228 to 244 (SVPSTTTTSTTTVPTST). Over residues 245-260 (NNDTASITNSSTSHIH) the composition is skewed to polar residues.

Its subcellular location is the nucleus. Functionally, transcription factor required for yeast cell adherence to silicone substrate. The polypeptide is Transcriptional regulator of yeast form adherence 4 (TRY4) (Candida albicans (strain SC5314 / ATCC MYA-2876) (Yeast)).